The following is a 427-amino-acid chain: Inward rectifier potassium channel 2 (427 aa).

Over Met-1–Trp-81 the chain is Cytoplasmic. Cys-76 carries the S-nitrosocysteine modification. The chain crosses the membrane as a helical span at residues Arg-82 to Ile-106. Residues Ala-107–Ser-128 are Extracellular-facing. An intramembrane region (helical; Pore-forming) is located at residues Phe-129–Gln-140. Residues Thr-141–Phe-147 constitute an intramembrane region (pore-forming). Positions Thr-142–Phe-147 match the Selectivity filter motif. The Extracellular segment spans residues Arg-148–Ile-156. The chain crosses the membrane as a helical span at residues Ala-157 to Ala-178. Over Val-179 to Ile-427 the chain is Cytoplasmic. The interval Ala-181 to Leu-208 is polyphosphoinositide (PIP2)-binding. The disordered stretch occupies residues Ser-384–Ile-427. Positions Ser-425 to Ile-427 match the PDZ-binding motif.

Belongs to the inward rectifier-type potassium channel (TC 1.A.2.1) family. KCNJ2 subfamily. As to quaternary structure, homotetramer. Homomultimeric and heteromultimeric association with KCNJ4/Kir2.3. Can form heteromeric channels with Kir2.6/KCNJ18. Associates, via its PDZ-recognition domain, with a complex containing LIN7A, LIN7B, LIN7C, DLG1, CASK and APBA1. In terms of processing, S-nitrosylation increases the open probability and inward rectifying currents.

It localises to the cell membrane. Its subcellular location is the sarcolemma. It is found in the T-tubule. It carries out the reaction K(+)(in) = K(+)(out). Activated by phosphatidylinositol 4,5 biphosphate (PtdIns(4,5)P2). In terms of biological role, inward rectifier potassium channels are characterized by a greater tendency to allow potassium to flow into the cell rather than out of it. Their voltage dependence is regulated by the concentration of extracellular potassium; as external potassium is raised, the voltage range of the channel opening shifts to more positive voltages. The inward rectification is mainly due to the blockage of outward current by internal magnesium. Blocked by external barium or cesium. Probably participates in establishing action potential waveform and excitability of neuronal and muscle tissues. The polypeptide is Inward rectifier potassium channel 2 (KCNJ2) (Cavia porcellus (Guinea pig)).